A 122-amino-acid chain; its full sequence is Transcription initiation factor IIA subunit 2 (122 aa).

2 positions are modified to phosphoserine: Ser-95 and Ser-102.

This sequence belongs to the TFIIA subunit 2 family. TFIIA is a heterodimer composed of the large TOA1 and a small TOA2 subunits. Interacts with TBP. Interacts with TAF11. Interacts with KAP122.

Its subcellular location is the cytoplasm. The protein resides in the nucleus. Functionally, TFIIA is a component of the transcription machinery of RNA polymerase II and plays an important role in transcriptional activation. TFIIA in a complex with TBP mediates transcriptional activity. This Saccharomyces cerevisiae (strain ATCC 204508 / S288c) (Baker's yeast) protein is Transcription initiation factor IIA subunit 2 (TOA2).